The primary structure comprises 441 residues: Inositol hexakisphosphate kinase 1 (441 aa).

Positions 100 to 175 (ETVEQDDTTE…MLDGNSGLSS (76 aa)) are disordered. The span at 113–123 (PRRKHSRRSLH) shows a compositional bias: basic residues. Over residues 137 to 149 (SLSLETSESSQEA) the composition is skewed to low complexity. The span at 150–160 (KSPKVELHSHS) shows a compositional bias: basic and acidic residues. At Ser151 the chain carries Phosphoserine. 220 to 228 (PCVLDLKMG) is a substrate binding site. Residues 370 to 392 (SSCGPSTSPSNTSPEAGPSSQPK) are disordered. Residues 372 to 391 (CGPSTSPSNTSPEAGPSSQP) are compositionally biased toward polar residues.

Belongs to the inositol phosphokinase (IPK) family.

The protein resides in the cytoplasm. It is found in the nucleus. It carries out the reaction 1D-myo-inositol hexakisphosphate + ATP = 5-diphospho-1D-myo-inositol 1,2,3,4,6-pentakisphosphate + ADP. It catalyses the reaction 1-diphospho-1D-myo-inositol 2,3,4,5,6-pentakisphosphate + ATP + H(+) = 1,5-bis(diphospho)-1D-myo-inositol 2,3,4,6-tetrakisphosphate + ADP. Converts inositol hexakisphosphate (InsP6) to diphosphoinositol pentakisphosphate (InsP7/PP-InsP5). Converts 1,3,4,5,6-pentakisphosphate (InsP5) to PP-InsP4. The chain is Inositol hexakisphosphate kinase 1 (IP6K1) from Homo sapiens (Human).